The following is a 217-amino-acid chain: Ribulose-phosphate 3-epimerase (217 aa).

Serine 6 is a substrate binding site. Histidine 29, aspartate 31, and histidine 62 together coordinate a divalent metal cation. Residue aspartate 31 is the Proton acceptor of the active site. Residues histidine 62, 138–141 (GFGG), 171–173 (DGG), and 193–194 (GS) each bind substrate. An a divalent metal cation-binding site is contributed by aspartate 171. Aspartate 171 acts as the Proton donor in catalysis.

It belongs to the ribulose-phosphate 3-epimerase family. A divalent metal cation is required as a cofactor.

It catalyses the reaction D-ribulose 5-phosphate = D-xylulose 5-phosphate. Its pathway is carbohydrate degradation. In terms of biological role, catalyzes the reversible epimerization of D-ribulose 5-phosphate to D-xylulose 5-phosphate. This chain is Ribulose-phosphate 3-epimerase, found in Helicobacter pylori (strain J99 / ATCC 700824) (Campylobacter pylori J99).